The primary structure comprises 448 residues: Protein giant (448 aa).

Disordered stretches follow at residues 23-47, 83-134, 238-259, and 298-363; these read MHHHQYQHHQQQPLHHLPHSQLPVQ, QQHQ…ASPT, VEATTPTTSSSGEAGKNTRPFK, and IRSS…TSSS. Positions 30–47 are enriched in low complexity; sequence HHQQQPLHHLPHSQLPVQ. Over residues 100-112 the composition is skewed to basic and acidic residues; it reads DLSRRCDSVETPR. The segment covering 115–134 has biased composition (low complexity); the sequence is PSPYQTSYSYGSGSPSASPT. Polar residues predominate over residues 298–310; the sequence is IRSSNGGSRTVTN. Low complexity predominate over residues 318–333; that stretch reads SRSGSVNEGSSSNNNS. In terms of domain architecture, bZIP spans 384-447; that stretch reads DAAYYERRRK…AAFTSAKVTT (64 aa). The tract at residues 390-406 is basic motif; the sequence is RRRKNNAAAKKSRDRRR. Residues 407–414 form a leucine-zipper region; sequence IKEDEIAI.

The protein belongs to the bZIP family. In terms of assembly, homodimer or heterodimer. In terms of processing, phosphorylated at multiple sites.

It localises to the nucleus. In terms of biological role, represses the expression of both the krueppel and knirps segmentation gap genes. Binds, in vitro, to the krueppel regulatory elements CD1 and CD2. It is required in the early embryo for the development of portions of the head and abdomen. This is Protein giant (gt) from Drosophila melanogaster (Fruit fly).